The primary structure comprises 61 residues: Large ribosomal subunit protein uL30 (61 aa).

The protein belongs to the universal ribosomal protein uL30 family. In terms of assembly, part of the 50S ribosomal subunit.

The protein is Large ribosomal subunit protein uL30 of Clostridioides difficile (strain 630) (Peptoclostridium difficile).